Reading from the N-terminus, the 337-residue chain is Phenylalanine--tRNA ligase alpha subunit (337 aa).

A Mg(2+)-binding site is contributed by Glu-258.

Belongs to the class-II aminoacyl-tRNA synthetase family. Phe-tRNA synthetase alpha subunit type 1 subfamily. In terms of assembly, tetramer of two alpha and two beta subunits. Mg(2+) is required as a cofactor.

The protein resides in the cytoplasm. It catalyses the reaction tRNA(Phe) + L-phenylalanine + ATP = L-phenylalanyl-tRNA(Phe) + AMP + diphosphate + H(+). This chain is Phenylalanine--tRNA ligase alpha subunit, found in Burkholderia thailandensis (strain ATCC 700388 / DSM 13276 / CCUG 48851 / CIP 106301 / E264).